Consider the following 305-residue polypeptide: Superkiller complex protein 8 (305 aa).

WD repeat units lie at residues 14–57 (AHED…LELQ), 62–101 (GHQL…QIKS), 104–143 (AGPV…KEHS), 146–187 (TRGK…HTLE), 188–227 (GHAM…LAGT), 230–269 (GHGS…CVNT), and 272–305 (DHQD…DCPM).

This sequence belongs to the SKI8 family. As to quaternary structure, component of the PAF1 complex. Component of the SKI complex.

The protein localises to the nucleus. The protein resides in the cytoplasm. In terms of biological role, component of the PAF1 complex (PAF1C) which has multiple functions during transcription by RNA polymerase II and is implicated in regulation of development and maintenance of embryonic stem cell pluripotency. PAF1C associates with RNA polymerase II through interaction with POLR2A CTD non-phosphorylated and 'Ser-2'- and 'Ser-5'-phosphorylated forms and is involved in transcriptional elongation, acting both independently and synergistically with TCEA1 and in cooperation with the DSIF complex and HTATSF1. Also acts as a component of the SKI complex, a multiprotein complex that assists the RNA-degrading exosome during the mRNA decay and quality-control pathways. The SKI complex catalyzes mRNA extraction from 80S ribosomal complexes in the 3'-5' direction and channels mRNA to the cytosolic exosome for degradation. This is Superkiller complex protein 8 (skic8) from Danio rerio (Zebrafish).